The sequence spans 176 residues: Ribosome rescue factor SmrB (176 aa).

Residues 93 to 168 form the Smr domain; it reads LDLHGYRQSE…GDAALLVLID (76 aa).

Belongs to the SmrB family. Associates with collided ribosomes, but not with correctly translating polysomes.

Functionally, acts as a ribosome collision sensor. Detects stalled/collided disomes (pairs of ribosomes where the leading ribosome is stalled and a second ribosome has collided with it) and endonucleolytically cleaves mRNA at the 5' boundary of the stalled ribosome. Stalled/collided disomes form a new interface (primarily via the 30S subunits) that binds SmrB. Cleaved mRNA becomes available for tmRNA ligation, leading to ribosomal subunit dissociation and rescue of stalled ribosomes. In Shewanella baltica (strain OS223), this protein is Ribosome rescue factor SmrB.